Here is a 166-residue protein sequence, read N- to C-terminus: Large ribosomal subunit protein uL10 (166 aa).

Belongs to the universal ribosomal protein uL10 family. Part of the ribosomal stalk of the 50S ribosomal subunit. The N-terminus interacts with L11 and the large rRNA to form the base of the stalk. The C-terminus forms an elongated spine to which L12 dimers bind in a sequential fashion forming a multimeric L10(L12)X complex.

In terms of biological role, forms part of the ribosomal stalk, playing a central role in the interaction of the ribosome with GTP-bound translation factors. The protein is Large ribosomal subunit protein uL10 of Hydrogenovibrio crunogenus (strain DSM 25203 / XCL-2) (Thiomicrospira crunogena).